A 160-amino-acid polypeptide reads, in one-letter code: Crossover junction endodeoxyribonuclease RuvC (160 aa).

Residues aspartate 7, glutamate 70, and aspartate 142 contribute to the active site. 3 residues coordinate Mg(2+): aspartate 7, glutamate 70, and aspartate 142.

It belongs to the RuvC family. Homodimer which binds Holliday junction (HJ) DNA. The HJ becomes 2-fold symmetrical on binding to RuvC with unstacked arms; it has a different conformation from HJ DNA in complex with RuvA. In the full resolvosome a probable DNA-RuvA(4)-RuvB(12)-RuvC(2) complex forms which resolves the HJ. Mg(2+) is required as a cofactor.

Its subcellular location is the cytoplasm. It carries out the reaction Endonucleolytic cleavage at a junction such as a reciprocal single-stranded crossover between two homologous DNA duplexes (Holliday junction).. In terms of biological role, the RuvA-RuvB-RuvC complex processes Holliday junction (HJ) DNA during genetic recombination and DNA repair. Endonuclease that resolves HJ intermediates. Cleaves cruciform DNA by making single-stranded nicks across the HJ at symmetrical positions within the homologous arms, yielding a 5'-phosphate and a 3'-hydroxyl group; requires a central core of homology in the junction. The consensus cleavage sequence is 5'-(A/T)TT(C/G)-3'. Cleavage occurs on the 3'-side of the TT dinucleotide at the point of strand exchange. HJ branch migration catalyzed by RuvA-RuvB allows RuvC to scan DNA until it finds its consensus sequence, where it cleaves and resolves the cruciform DNA. This is Crossover junction endodeoxyribonuclease RuvC from Ehrlichia ruminantium (strain Welgevonden).